The following is a 275-amino-acid chain: Peptidoglycan-N-acetylglucosamine deacetylase BC_1960 (275 aa).

Residues 81 to 262 enclose the NodB homology domain; it reads AEVALTFDDG…QLKTKGARFV (182 aa). Aspartate 88 (proton acceptor) is an active-site residue. Zn(2+) contacts are provided by aspartate 89, histidine 139, and histidine 143. Proline 179 is subject to 2-hydroxyproline; partial. The Proton donor role is filled by histidine 233.

The protein belongs to the polysaccharide deacetylase family. The cofactor is Zn(2+). In terms of processing, hydroxylated on Pro-179. Hydroxylation alters the active site and enhances significantly deacetylase activity, probably by creating a more favorable environment for transition-state stabilization. It might be autocatalytic.

It carries out the reaction peptidoglycan-N-acetyl-D-glucosamine + H2O = peptidoglycan-D-glucosamine + acetate.. Its activity is regulated as follows. Deacetylase activity is stimulated by hydroxylation on Pro-179. Inhibited by CuCl(2) and ZnCl(2). Inhibited by the hydroxamate N-hydroxy-4-(naphthalene-1-yl)benzamide (NHNB). Its function is as follows. Catalyzes the deacetylation of N-acetylglucosamine (GlcNAc) residues in peptidoglycan. Also acts on soluble chitin substrates and N-acetylchitooligomers. Acts on cell wall peptidoglycan from the Gram-positive bacteria B.cereus and B.subtilis and the Gram-negative bacterium H.pylori. Not active on acetylated xylan. The sequence is that of Peptidoglycan-N-acetylglucosamine deacetylase BC_1960 from Bacillus cereus (strain ATCC 14579 / DSM 31 / CCUG 7414 / JCM 2152 / NBRC 15305 / NCIMB 9373 / NCTC 2599 / NRRL B-3711).